A 511-amino-acid chain; its full sequence is 3-octaprenyl-4-hydroxybenzoate carboxy-lyase (511 aa).

Asn-176 is a Mn(2+) binding site. Residues 179–181 (IYR), 193–195 (RWL), and 198–199 (RG) each bind prenylated FMN. Glu-242 lines the Mn(2+) pocket. Asp-311 functions as the Proton donor in the catalytic mechanism.

This sequence belongs to the UbiD family. In terms of assembly, homohexamer. Requires prenylated FMN as cofactor. The cofactor is Mn(2+).

The protein resides in the cell membrane. It catalyses the reaction a 4-hydroxy-3-(all-trans-polyprenyl)benzoate + H(+) = a 2-(all-trans-polyprenyl)phenol + CO2. The protein operates within cofactor biosynthesis; ubiquinone biosynthesis. Its function is as follows. Catalyzes the decarboxylation of 3-octaprenyl-4-hydroxy benzoate to 2-octaprenylphenol, an intermediate step in ubiquinone biosynthesis. The sequence is that of 3-octaprenyl-4-hydroxybenzoate carboxy-lyase from Laribacter hongkongensis (strain HLHK9).